Consider the following 216-residue polypeptide: Cytidylate kinase (216 aa).

7–15 is an ATP binding site; it reads GPAGTGKST.

It belongs to the cytidylate kinase family. Type 1 subfamily.

The protein resides in the cytoplasm. It catalyses the reaction CMP + ATP = CDP + ADP. It carries out the reaction dCMP + ATP = dCDP + ADP. The chain is Cytidylate kinase from Chlamydia muridarum (strain MoPn / Nigg).